A 57-amino-acid chain; its full sequence is UPF0391 membrane protein RPA3029 (57 aa).

The next 2 membrane-spanning stretches (helical) occupy residues 6-26 and 35-55; these read WALI…TGIS and ILFY…FTIF.

Belongs to the UPF0391 family.

It is found in the cell membrane. This Rhodopseudomonas palustris (strain ATCC BAA-98 / CGA009) protein is UPF0391 membrane protein RPA3029.